The chain runs to 430 residues: Cytochrome c biogenesis protein CcsB (430 aa).

3 consecutive transmembrane segments (helical) span residues 14–34, 72–92, and 162–182; these read LRIAIGLLLVIALASALGTAI, SSWFLALLAWLGLALILCSWR, and AGPMLVHLGLVLLMLGAVWGS.

This sequence belongs to the Ccs1/CcsB family. May interact with CcsA.

It is found in the cellular thylakoid membrane. Functionally, required during biogenesis of c-type cytochromes (cytochrome c6 and cytochrome f) at the step of heme attachment. This is Cytochrome c biogenesis protein CcsB from Prochlorococcus marinus (strain MIT 9313).